Consider the following 59-residue polypeptide: UPF0434 protein lpl1884 (59 aa).

The protein belongs to the UPF0434 family.

The sequence is that of UPF0434 protein lpl1884 from Legionella pneumophila (strain Lens).